The chain runs to 350 residues: MASTGSQASDIDEIFGFFSDGAPPTKKPRKLLPSLKTKKPRELVLVIGTGISAAVAPQVPALKSWKGLIQALLDAAIDFDLLEDEESKKFQKCLHEDKNLVHVAHDLIQKLSPRTSNVRSTFFKDCLYEVFDDLESKMEDSGKQLLQSVLHLMENGALVLTTNFDNLLELYAADQGKQLESLDLTDEKKVLEWAQEKRKLSVLHIHGVYTNPSGIVLHPAGYQNVLRNTEVMREIQKLYENKSFLFLGCGWTVDDTTFQALFLEAVKHKSDLEHFMLVRRGDVDEFKKLRENMLDKGIKVISYGNDYADLPEYFKRLTCEISTRGRSGMVREGQLNGSSAAHSEIRGCST.

At Ala-2 the chain carries N-acetylalanine. Residue Ser-9 is modified to Phosphoserine.

The protein belongs to the FAM118 family.

Its subcellular location is the nucleus. The protein localises to the cajal body. Its function is as follows. May play a role in Cajal bodies formation. In Macaca fascicularis (Crab-eating macaque), this protein is Protein FAM118B (FAM118B).